A 116-amino-acid chain; its full sequence is Iron-sulfur cluster insertion protein ErpA (116 aa).

3 residues coordinate iron-sulfur cluster: C44, C108, and C110.

This sequence belongs to the HesB/IscA family. In terms of assembly, homodimer. The cofactor is iron-sulfur cluster.

Its function is as follows. Required for insertion of 4Fe-4S clusters for at least IspG. In Pseudomonas putida (strain ATCC 47054 / DSM 6125 / CFBP 8728 / NCIMB 11950 / KT2440), this protein is Iron-sulfur cluster insertion protein ErpA.